The sequence spans 163 residues: MKLNTLFNLNGAKKCSKRIGRGIGSGKGKTCGRGAKGQKSRAKVARGFEGGQTPLIKRLPKRGFKSMNKRNYNIINIITILRLVKANKIEYGAVIDKLLLLKLKMLKKSINKIKLLWANPSSLVLNSEDISLLTKLDLQFNLDEYSISARKNIIKLGMKVINN.

The protein belongs to the universal ribosomal protein uL15 family. In terms of assembly, part of the 50S ribosomal subunit.

Binds to the 23S rRNA. In Orientia tsutsugamushi (strain Ikeda) (Rickettsia tsutsugamushi), this protein is Large ribosomal subunit protein uL15.